The primary structure comprises 64 residues: Copper-metallothionein (64 aa).

N-acetylserine is present on Ser1. Residues Cys7, Cys11, Cys16, Cys18, Cys22, Cys24, Cys28, Cys30, Cys33, Cys36, Cys38, Cys43, Cys45, Cys49, Cys55, Cys57, Cys61, and Cys63 each coordinate Cu(+).

The protein belongs to the metallothionein superfamily. Type 2 family.

The metallothioneins are involved in the cellular sequestration of toxic metal ions and regulation of essential trace elements. This isoform binds exclusively copper. The protein is Copper-metallothionein of Helix pomatia (Roman snail).